The primary structure comprises 269 residues: 2' cyclic ADP-D-ribose synthase AbTIR (269 aa).

A coiled-coil region spans residues 31 to 99 (LKTKLSEISR…KQQKDEIEHQ (69 aa)). The TIR domain maps to 133 to 266 (PEYDLFISHA…EIAHQLADVI (134 aa)). Serine 143, lysine 172, and lysine 202 together coordinate NAD(+). The active site involves glutamate 208. Lysine 245 serves as a coordination point for NAD(+).

Homodimer. In the presence of NAD(+) analog 8-amino-isoquinoline adenine dinucleotide (3AD) forms filaments with 3AD between monomers; conformational changes occur upon 3AD binding.

It carries out the reaction NAD(+) = 2'cADPR + nicotinamide + H(+). It catalyses the reaction NAD(+) + H2O = ADP-D-ribose + nicotinamide + H(+). The catalysed reaction is NADP(+) + H2O = ADP-D-ribose 2'-phosphate + nicotinamide + H(+). In terms of biological role, NAD(+) hydrolase (NADase) that catalyzes cleavage of NAD(+) into ADP-D-ribose (ADPR) and nicotinamide. In addition to ADPR, also generates a cyclization variant of cyclic ADPR (cADPR), termed 2'cADPR (v-cADPR). Cleaves NADP(+), but does not cyclize the product. The protein is 2' cyclic ADP-D-ribose synthase AbTIR of Acinetobacter baumannii (strain 1295743).